A 145-amino-acid chain; its full sequence is MLRLVRSSRAFHTSLIRAGTQANINPVAGKTADEVDVKIEPIPRHGEETETKRARLLYQSRKRGILETDLLLSRYAKLYLKDMTREELEEYDKLLDEPDWDIFYWATRNDNIKPCPERWAKSPVMEKLRELAENKEREVLRMPDL.

This sequence belongs to the SDHAF2 family. As to quaternary structure, interacts with the flavoprotein subunit within the SDH catalytic dimer.

It is found in the mitochondrion matrix. Functionally, plays an essential role in the assembly of succinate dehydrogenase (SDH), an enzyme complex (also referred to as respiratory complex II) that is a component of both the tricarboxylic acid (TCA) cycle and the mitochondrial electron transport chain, and which couples the oxidation of succinate to fumarate with the reduction of ubiquinone (coenzyme Q) to ubiquinol. Required for flavinylation (covalent attachment of FAD) of the flavoprotein subunit of the SDH catalytic dimer. This Yarrowia lipolytica (strain CLIB 122 / E 150) (Yeast) protein is Succinate dehydrogenase assembly factor 2, mitochondrial.